The sequence spans 548 residues: GLC7-interacting protein 2 (548 aa).

Positions 1-23 (MYIKAEQKPQQFERKNEKLDRNK) are enriched in basic and acidic residues. Disordered regions lie at residues 1 to 54 (MYIK…STEE) and 118 to 143 (VESLNGSTRPPFKIELPPLSPKSTVP). Serine 51 carries the phosphoserine modification. The residue at position 52 (threonine 52) is a Phosphothreonine. Serine 155 carries the post-translational modification Phosphoserine. The interval 191–212 (RSKSLPTTPGIRSGNGVQARDG) is disordered. 2 positions are modified to phosphoserine: serine 221 and serine 238. The tract at residues 293–346 (FAHPAKISNPNNGKGTNNTKLRKSKRFQNLLKNRTDMPPSKSNKKFVNGGGAHE) is disordered. The CBM21 domain occupies 419–534 (HNGNDCNGVA…NNNGNNYKVD (116 aa)).

Interacts with phosphatase 1 (GLC7).

This chain is GLC7-interacting protein 2 (GIP2), found in Saccharomyces cerevisiae (strain ATCC 204508 / S288c) (Baker's yeast).